The chain runs to 242 residues: Universal stress protein PHOS32 (242 aa).

Residues 1-43 constitute a chloroplast transit peptide; it reads MNPADSDHPQLPNIKIHHPPSPRHSHHHHSSSTPSSAATPTPT. Residues 1-45 are disordered; sequence MNPADSDHPQLPNIKIHHPPSPRHSHHHHSSSTPSSAATPTPTAG. Basic residues predominate over residues 15 to 30; that stretch reads KIHHPPSPRHSHHHHS. Proline 19 is an ATP binding site. Serine 21 is modified (phosphoserine; by MAPK3 and MAPK6). Residues 31–44 show a composition bias toward low complexity; that stretch reads SSTPSSAATPTPTA. ATP is bound by residues valine 83, 168 to 178, and 186 to 188; these read GSRGFGAEKKR and SVS. A Phosphoserine modification is found at serine 219.

This sequence belongs to the universal stress protein A family. Phosphorylated by MAPK3 and MAPK6 after pathogenic elicitation (e.g. bacterial flg22, Phytophthora infestans zoospores and xylanase).

It localises to the plastid. It is found in the chloroplast. The polypeptide is Universal stress protein PHOS32 (Arabidopsis thaliana (Mouse-ear cress)).